The primary structure comprises 174 residues: Repair DNA polymerase X (174 aa).

Positions Arg42 to Asp51 are involved in ssDNA binding. Residues Asp49 and Asp51 each contribute to the Mg(2+) site. The cysteines at positions 81 and 86 are disulfide-linked. Asp100 serves as a coordination point for Mg(2+).

Belongs to the DNA polymerase type-X family. Mg(2+) serves as cofactor.

The protein resides in the virion. It carries out the reaction DNA(n) + a 2'-deoxyribonucleoside 5'-triphosphate = DNA(n+1) + diphosphate. In terms of biological role, error-prone polymerase lacking a proofreading 3'-5' exonuclease which catalyzes the gap-filling reaction during the DNA repair process. Specifically binds intermediates in the single-nucleotide base-excision repair process. Also catalyzes DNA polymerization with low nucleotide-insertion fidelity. Probably acts as a strategic DNA mutase, which gives rise to a rapid emergence of variants. Generates mismatched G-G pairs, in that case, the polymerase first binds the deoxynucleotide followed by mismatch formation. Together with the viral DNA ligase, fills the single nucleotide gaps generated by the AP endonuclease. Binds DNA with high affinity via the helix alphaE. The protein is Repair DNA polymerase X of Ornithodoros (relapsing fever ticks).